The primary structure comprises 56 residues: Small ribosomal subunit protein uS14z/uS14y/uS14x (56 aa).

Positions 21, 24, 39, and 42 each coordinate Zn(2+).

This sequence belongs to the universal ribosomal protein uS14 family. Zn(2+) serves as cofactor.

The sequence is that of Small ribosomal subunit protein uS14z/uS14y/uS14x (RPS29A) from Arabidopsis thaliana (Mouse-ear cress).